The primary structure comprises 87 residues: Stannin (87 aa).

At 1–10 (MSIMDHSPTT) the chain is on the mitochondrial intermembrane side. A helical membrane pass occupies residues 11-31 (GVVTVIVILIAIAALGALILG). The Cytoplasmic portion of the chain corresponds to 32-87 (CWCYLRLQRISQSEDEESIVGDGETKEPFLLVQYSAKGPCVERKAKLTPNGPEVHS). At Ser-49 the chain carries Phosphoserine.

This sequence belongs to the stannin family. Monomer.

It localises to the mitochondrion outer membrane. Plays a role in the toxic effects of organotins. Plays a role in endosomal maturation. The chain is Stannin (SNN) from Bos taurus (Bovine).